The primary structure comprises 465 residues: Sorting nexin-8 (465 aa).

Over residues 1 to 19 (MTGRAMDPLPAAAVGAAAE) the composition is skewed to low complexity. The interval 1-36 (MTGRAMDPLPAAAVGAAAEAEADEEADPPASDLPTP) is disordered. The PX domain occupies 73–181 (ARDTVQVELI…KLFLSFSGSD (109 aa)). Residues R109, K135, and R148 each coordinate a 1,2-diacyl-sn-glycero-3-phospho-(1D-myo-inositol-3-phosphate). T452 is modified (phosphothreonine). S456 is modified (phosphoserine).

Belongs to the sorting nexin family.

The protein resides in the early endosome membrane. In terms of biological role, may be involved in several stages of intracellular trafficking. May play a role in intracellular protein transport from early endosomes to the trans-Golgi network. The chain is Sorting nexin-8 (SNX8) from Homo sapiens (Human).